Reading from the N-terminus, the 373-residue chain is MNMRRVFGGVSTDLFPSRSMYRPLQSGGNLVMLFKGCRRFVRTTCRVSIPGGSLGNESKAPPRFLRDRKIVPDADPPNMEDIHKLYRLFEQSSRLTILTGAGVSTECGIPDYRSPNGAYSSGFKPITHQEFTRSSRARRRYWARSYAGWRRFTAAQPGPAHTALASLEKAGRINFMITQNVDRLHHRAGSDPLELHGTVYTVMCLECGFSFPRDLFQDQLKAINPKWAEAIESIDHGDPGSEKSFGMKQRPDGDIEIDEKFWEEGFHIPVCEKCKGVLKPDVIFFGDNIPKERATQAMEVAKQSDAFLVLGSSLMTMSAFRLCRAAHEAGAMTAIVNIGETRADDIVPLKINARVGEILHRVLDVGSLSVPAL.

A mitochondrion-targeting transit peptide spans 1–47 (MNMRRVFGGVSTDLFPSRSMYRPLQSGGNLVMLFKGCRRFVRTTCRV). One can recognise a Deacetylase sirtuin-type domain in the interval 75 to 373 (DPPNMEDIHK…DVGSLSVPAL (299 aa)). NAD(+) contacts are provided by residues 100 to 120 (GAGVSTECGIPDYRSPNGAYS) and 179 to 182 (QNVD). H196 functions as the Proton acceptor in the catalytic mechanism. Positions 204, 207, 271, and 274 each coordinate Zn(2+). Residues 311–313 (GSS), 337–339 (NIG), and V355 contribute to the NAD(+) site.

Belongs to the sirtuin family. Class II subfamily. In terms of assembly, binds to the promoter region of genes influenced by ethylene. Interacts with ENAP1; this interaction is enhanced in the presence of ethylene. Requires Zn(2+) as cofactor.

The protein localises to the mitochondrion matrix. It is found in the nucleus. It catalyses the reaction N(6)-acetyl-L-lysyl-[protein] + NAD(+) + H2O = 2''-O-acetyl-ADP-D-ribose + nicotinamide + L-lysyl-[protein]. In terms of biological role, NAD-dependent protein deacylase. Catalyzes the NAD-dependent hydrolysis of acyl groups from lysine residues. Involved in responses to ethylene leading to the transcriptional repression of some ethylene-responsive genes via the regulation of histone acetylation H3K9Ac. Negatively regulates plant basal defense against plant pathogens, possibly by suppressing salicylic acid biosynthesis. This chain is NAD-dependent protein deacylase SRT2, found in Arabidopsis thaliana (Mouse-ear cress).